A 132-amino-acid polypeptide reads, in one-letter code: Protein NrdI (132 aa).

This sequence belongs to the NrdI family.

Its function is as follows. Probably involved in ribonucleotide reductase function. The chain is Protein NrdI from Bartonella quintana (strain Toulouse) (Rochalimaea quintana).